Consider the following 250-residue polypeptide: Protein REVERSION-TO-ETHYLENE SENSITIVITY1 (250 aa).

The next 3 helical transmembrane spans lie at 55–75, 200–220, and 221–241; these read IVWT…HIGL, SVVR…VLVG, and WPFL…FIIA.

In terms of assembly, interacts with ETR1 through a region corresponding to its ethylene-binding domain. Strongly expressed in 1-4-day-old seedlings in the apical hook, cotyledons, root vascular tissue, root tip and root hairs, with little or no expression in the hypocotyl. In light-grown seedlings, expression could also be seen in the apex and young leaves, and disappeared from the cotyledons by 10 days. In mature plants, expressed in floral buds, the style of mature flowers, stems and the rachis.

The protein resides in the endoplasmic reticulum membrane. It localises to the golgi apparatus membrane. Its function is as follows. Acts at an early step in the ethylene signaling pathway. Positively regulates ETR1, leading to the negative regulation of ethylene responses. This Arabidopsis thaliana (Mouse-ear cress) protein is Protein REVERSION-TO-ETHYLENE SENSITIVITY1 (RTE1).